The following is a 264-amino-acid chain: Protein-lysine methyltransferase METTL21C (264 aa).

Residues 1-10 show a composition bias toward polar residues; that stretch reads MDVCLSSAQQ. The interval 1–46 is disordered; the sequence is MDVCLSSAQQPGRRGEGLSSPGGWLEAEKKGAPQKDSTGGVLEESN. S-adenosyl-L-methionine contacts are provided by residues Trp-92, 120–122, Asp-141, Trp-172, and Ser-193; that span reads GAG.

The protein belongs to the methyltransferase superfamily. METTL21 family. In terms of assembly, interacts with members of the heat shock protein 70 families; these proteins may possibly be methylation substrates for the enzyme.

It localises to the nucleus. It is found in the cytoplasm. It catalyses the reaction L-lysyl-[protein] + S-adenosyl-L-methionine = N(6)-methyl-L-lysyl-[protein] + S-adenosyl-L-homocysteine + H(+). It carries out the reaction N(6)-methyl-L-lysyl-[protein] + S-adenosyl-L-methionine = N(6),N(6)-dimethyl-L-lysyl-[protein] + S-adenosyl-L-homocysteine + H(+). The catalysed reaction is N(6),N(6)-dimethyl-L-lysyl-[protein] + S-adenosyl-L-methionine = N(6),N(6),N(6)-trimethyl-L-lysyl-[protein] + S-adenosyl-L-homocysteine + H(+). Its function is as follows. Protein-lysine N-methyltransferase using S-adenosyl-L-methionine as methyl donor. Mono-di and trimethylates 'Lys-943' of AARS1. In Homo sapiens (Human), this protein is Protein-lysine methyltransferase METTL21C.